The following is a 395-amino-acid chain: Flap endonuclease 1 (395 aa).

The segment at 1-104 (MGIKHLYQLI…GELAKRFQRK (104 aa)) is N-domain. Asp-34 contacts Mg(2+). DNA contacts are provided by Arg-47 and Arg-70. 5 residues coordinate Mg(2+): Asp-86, Glu-158, Glu-160, Asp-179, and Asp-181. Residues 122-253 (DVEKFSRRTV…STALKLIREH (132 aa)) form an I-domain region. Position 158 (Glu-158) interacts with DNA. The DNA site is built by Gly-231 and Asp-233. Residue Asp-233 participates in Mg(2+) binding. The interaction with PCNA stretch occupies residues 341-349 (QQSRLEGFF). The segment at 359-395 (KATLKRKADEKLEEKKKKQKVDAKAKKQAKAKPRTAG) is disordered. The span at 364–383 (RKADEKLEEKKKKQKVDAKA) shows a compositional bias: basic and acidic residues. Positions 384–395 (KKQAKAKPRTAG) are enriched in basic residues.

The protein belongs to the XPG/RAD2 endonuclease family. FEN1 subfamily. In terms of assembly, interacts with PCNA. Three molecules of fen1 bind to one PCNA trimer with each molecule binding to one PCNA monomer. PCNA stimulates the nuclease activity without altering cleavage specificity. Mg(2+) is required as a cofactor. Post-translationally, phosphorylated. Phosphorylation upon DNA damage induces relocalization to the nuclear plasma.

The protein localises to the nucleus. The protein resides in the nucleolus. It is found in the nucleoplasm. It localises to the mitochondrion. Its function is as follows. Structure-specific nuclease with 5'-flap endonuclease and 5'-3' exonuclease activities involved in DNA replication and repair. During DNA replication, cleaves the 5'-overhanging flap structure that is generated by displacement synthesis when DNA polymerase encounters the 5'-end of a downstream Okazaki fragment. It enters the flap from the 5'-end and then tracks to cleave the flap base, leaving a nick for ligation. Also involved in the long patch base excision repair (LP-BER) pathway, by cleaving within the apurinic/apyrimidinic (AP) site-terminated flap. Acts as a genome stabilization factor that prevents flaps from equilibrating into structures that lead to duplications and deletions. Also possesses 5'-3' exonuclease activity on nicked or gapped double-stranded DNA, and exhibits RNase H activity. Also involved in replication and repair of rDNA and in repairing mitochondrial DNA. This Pyrenophora tritici-repentis (strain Pt-1C-BFP) (Wheat tan spot fungus) protein is Flap endonuclease 1 (fen1).